A 518-amino-acid chain; its full sequence is MIISSYHLLAPRCRRDQKVYNKSIHVLNTVAKGIKGWPFLGSAPALAAVDTNGIIGIFKSWAEQYGSITQFSAMGDKQVILTEDKDARELFVRRGIKYSDRGAPHAVEYISMKQNPGFRPKDDGWRRQRSMIQSAINITSINKYQSLMDDEATFTVNALLQSPDSFHGEFLRYSYSVLTSSLLGFSVRSPSDPFIHHNETFTAELMNSFRPDCFPSNVFPVLRKLPMWLLPSLRTMERLRKEYVGEMWAFRRKIEKLVKEGSATECIYKHFLLHRDQYNVTEEESVHTFQAMIDGGTRSPHNNLLTFLFLMMEFPEWQKKLQEEVDRVVGRDRMPSYRDIPNLPTVRAIVKETVRYRSIVAEMGIGHCLQTDDIYKGYFFEKGTVFNAIFASILMDKDTYPDGKLFNPARWLEPSYPTYKEPLTTYPNCQGFPAFGYGRRACPGVDFAERTLVIMFAKLGWTMNIRWPRDEDGNELREELQYEPVPAPRPLKFGCRLEARDADRAKIVEEAAKHLKLQ.

A heme-binding site is contributed by Cys-442.

Belongs to the cytochrome P450 family. The cofactor is heme.

Its pathway is secondary metabolite biosynthesis. Cytochrome P450 monooxygenase; part of the gene cluster that mediates the biosynthesis of pseurotin A, a competitive inhibitor of chitin synthase and an inducer of nerve-cell proliferation. The PKS-NRPS hybrid synthetase psoA is responsible for the biosynthesis of azaspirene, one of the first intermediates having the 1-oxa-7-azaspiro[4,4]-non-2-ene-4,6-dione core of pseurotin, via condensation of one acetyl-CoA, 4 malonyl-CoA, and a L-phenylalanine molecule. The dual-functional monooxygenase/methyltransferase psoF seems to be involved in the addition of the C3 methyl group onto the pseurotin scaffold. Azaspirene is then converted to synerazol through 4 steps including oxidation of C17 by the cytochrome P450 monooxygenase psoD, O-methylation of the hydroxy group of C8 by the methyltransferase psoC, and the trans-to-cis isomerization of the C13 olefin by the glutathione S-transferase psoE. The fourth step of synerazol production is performed by the dual-functional monooxygenase/methyltransferase psoF which seems to catalyze the epoxidation of the intermediate deepoxy-synerazol. Synerazol can be attacked by a water molecule nonenzymatically at two different positions to yield two diol products, pseurotin A and pseurotin D. The chain is Cytochrome P450 monooxygenase psoD from Aspergillus fumigatus (strain ATCC MYA-4609 / CBS 101355 / FGSC A1100 / Af293) (Neosartorya fumigata).